Here is a 1165-residue protein sequence, read N- to C-terminus: Adhesion G-protein coupled receptor G6 (1165 aa).

Positions 1–30 (MMFDTLGKRCCPWRLKPSALLFLFVLCVTC) are cleaved as a signal peptide. At 31-832 (VPLSVCGCGS…ASQIDGRNTK (802 aa)) the chain is on the extracellular side. Cys-41 and Cys-67 form a disulfide bridge. The region spanning 41–149 (CRLVLSNPSG…KGFNASYIRV (109 aa)) is the CUB domain. 2 residues coordinate Ca(2+): Glu-89 and Asp-97. A disulfide bridge links Cys-94 with Cys-111. Asn-121 is a glycosylation site (N-linked (GlcNAc...) asparagine). Ca(2+) contacts are provided by Asp-134, Ser-136, and Ile-137. An N-linked (GlcNAc...) asparagine glycan is attached at Asn-143. In terms of domain architecture, Pentraxin (PTX) spans 154–356 (RNQKVILPQT…ALKAEGNLSC (203 aa)). Cystine bridges form between Cys-186/Cys-254 and Cys-231/Cys-277. Residues Asn-258, Asn-314, Asn-324, Asn-353, Asn-370, Asn-410, Asn-417, Asn-424, Asn-458, Asn-462, and Asn-478 are each glycosylated (N-linked (GlcNAc...) asparagine). The interval 446 to 807 (DKRLVLWALL…LDAGETICLC (362 aa)) is mediates interaction with laminin-2. Intrachain disulfides connect Cys-498-Cys-533 and Cys-521-Cys-550. Residues Asn-536, Asn-549, Asn-563, Asn-570, Asn-665, Asn-674, Asn-720, Asn-746, Asn-781, and Asn-788 are each glycosylated (N-linked (GlcNAc...) asparagine). In terms of domain architecture, GAIN-B spans 640–823 (PHVNIETQNL…GVLMDLPRSA (184 aa)). 2 disulfide bridges follow: Cys-773–Cys-805 and Cys-792–Cys-807. The GPS stretch occupies residues 773-823 (CAFWDMNKNKSFGGWNTSGCVAHSDLDAGETICLCSHFTHFGVLMDLPRSA). Residues 812–820 (HFGVLMDLP) are stachel. Residues 833-853 (VLTFITYIGCGISAIFSAATL) form a helical membrane-spanning segment. Residues 854 to 873 (LTYVAFEKLRRDYPSKILMN) are Cytoplasmic-facing. A helical transmembrane segment spans residues 874–894 (LSSALLFLNLIFLLDGWVTSF). Residues 895 to 899 (GVAGL) lie on the Extracellular side of the membrane. The chain crosses the membrane as a helical span at residues 900–920 (CTAVAALLHFFLLATFTWMGL). At 921–940 (EAIHMYIALVKVFNTYIHRY) the chain is on the cytoplasmic side. The helical transmembrane segment at 941–961 (ILKFCIIGWGLPALVVSIILV) threads the bilayer. Residues 962 to 994 (SRRQNEVYGKESYGKDQDDEFCWIQDPVVFYVS) lie on the Extracellular side of the membrane. Residues 995-1015 (CAGYFGVMFFLNVAMFIVVMV) form a helical membrane-spanning segment. Residues 1016–1039 (QICGRNGKRSNRTLREEVLRNLRS) lie on the Cytoplasmic side of the membrane. A helical transmembrane segment spans residues 1040-1060 (VVSLTFLLGMTWGFAFFAWGP). Topologically, residues 1061–1062 (LN) are extracellular. A helical transmembrane segment spans residues 1063–1083 (IPFMYLFSIFNSLQGLFIFIF). Asn-1073 lines the 17alpha-hydroxyprogesterone pocket. The Cytoplasmic portion of the chain corresponds to 1084 to 1165 (HCAMKENVQK…KRNSHSDNFS (82 aa)). The span at 1126–1154 (NLGKSLSSSSIGSNSTYLTSKSKSSSTTY) shows a compositional bias: low complexity. A disordered region spans residues 1126-1165 (NLGKSLSSSSIGSNSTYLTSKSKSSSTTYFKRNSHSDNFS). Ser-1135 and Ser-1138 each carry phosphoserine.

The protein belongs to the G-protein coupled receptor 2 family. Adhesion G-protein coupled receptor (ADGR) subfamily. As to quaternary structure, heterodimer of 2 chains generated by proteolytic processing; the large extracellular N-terminal fragment and the membrane-bound C-terminal fragment predominantly remain associated and non-covalently linked. Interacts with Laminin-2; this interaction stabilizes the receptor in an inactive state. Laminin-2 polymerization could facilitate ADGRG6-NTF removal, thereby exposing the tethered agonist to drive myelination. Interacts with PRNP. Interacts with ITGB1. Interacts with LRP1. Proteolytically cleaved into 2 conserved sites: one in the GPS region of the GAIN-B domain (S1 site) and the other in the middle of the extracellular domain (S2 site). The proteolytic cleavage at S1 site generates an extracellular subunit and a seven-transmembrane subunit. Furin is involved in the cleavage of the S2 site generating a soluble fragment. Processing at the GPS region occurred independent of and probably prior to the cleavage at the S2 site. Proteolytic cleavage is required for activation of the receptor. In terms of tissue distribution, expressed at high levels in the heart, somite and otic vesicle during embryogenesis and in adult lung.

It is found in the cell membrane. Forms a heterodimer of 2 chains generated by proteolytic processing that remain associated through non-covalent interactions mediated by the GAIN-B domain. In the inactivated receptor, the Stachel sequence (also named stalk) is embedded in the GAIN-B domain, where it adopts a beta-strand conformation. On activation, the Stachel moves into the 7 transmembrane region and adopts a twisted hook-shaped configuration that forms contacts within the receptor, leading to coupling of a G-alpha protein, which activates signaling. The cleaved GAIN-B and N-terminal domains can then dissociate from the rest of the receptor. Adhesion G-protein coupled receptor (aGPCR) for steroid hormones, such as progesterone and 17alpha-hydroxyprogesterone (17OHP). Involved in many biological processes, such as myelination, sprouting angiogenesis, placenta, ear and cartilage development. Ligand binding causes a conformation change that triggers signaling via guanine nucleotide-binding proteins (G proteins) and modulates the activity of downstream effectors, such as adenylate cyclase. ADGRG6 is coupled to G(i) G alpha proteins and mediates inhibition of adenylate cyclase. Also able to couple to G(q) G proteins. Involved in myelination of the peripheral nervous system: required for differentiation of promyelinating Schwann cells and for normal myelination of axons. Also acts as a regulator of body length and bone mass. Acts as a regulator of blood-brain barrier formation in the central nervous system vie its association with LRP1 and ITGB1. The chain is Adhesion G-protein coupled receptor G6 from Mus musculus (Mouse).